Consider the following 621-residue polypeptide: Bifunctional protein GlmU (621 aa).

A pyrophosphorylase region spans residues Met-1–Arg-229. UDP-N-acetyl-alpha-D-glucosamine-binding positions include Leu-11 to Gly-14, Lys-25, Gln-76, and Gly-81 to Thr-82. Asp-106 serves as a coordination point for Mg(2+). The UDP-N-acetyl-alpha-D-glucosamine site is built by Gly-143, Glu-158, Asn-173, and Asn-227. Asn-227 is a binding site for Mg(2+). A linker region spans residues Arg-230–Ala-250. The interval Gly-251–Pro-621 is N-acetyltransferase. UDP-N-acetyl-alpha-D-glucosamine-binding residues include Arg-332 and Lys-350. His-362 (proton acceptor) is an active-site residue. Residues Tyr-365 and Asn-376 each coordinate UDP-N-acetyl-alpha-D-glucosamine. Residues Ala-379, Asn-385 to Tyr-386, Ala-422, and Arg-441 contribute to the acetyl-CoA site. Residues Ala-601 to Pro-621 are disordered.

It in the N-terminal section; belongs to the N-acetylglucosamine-1-phosphate uridyltransferase family. The protein in the C-terminal section; belongs to the transferase hexapeptide repeat family. Homotrimer. It depends on Mg(2+) as a cofactor.

Its subcellular location is the cytoplasm. It catalyses the reaction alpha-D-glucosamine 1-phosphate + acetyl-CoA = N-acetyl-alpha-D-glucosamine 1-phosphate + CoA + H(+). It carries out the reaction N-acetyl-alpha-D-glucosamine 1-phosphate + UTP + H(+) = UDP-N-acetyl-alpha-D-glucosamine + diphosphate. It functions in the pathway nucleotide-sugar biosynthesis; UDP-N-acetyl-alpha-D-glucosamine biosynthesis; N-acetyl-alpha-D-glucosamine 1-phosphate from alpha-D-glucosamine 6-phosphate (route II): step 2/2. Its pathway is nucleotide-sugar biosynthesis; UDP-N-acetyl-alpha-D-glucosamine biosynthesis; UDP-N-acetyl-alpha-D-glucosamine from N-acetyl-alpha-D-glucosamine 1-phosphate: step 1/1. It participates in bacterial outer membrane biogenesis; LPS lipid A biosynthesis. In terms of biological role, catalyzes the last two sequential reactions in the de novo biosynthetic pathway for UDP-N-acetylglucosamine (UDP-GlcNAc). The C-terminal domain catalyzes the transfer of acetyl group from acetyl coenzyme A to glucosamine-1-phosphate (GlcN-1-P) to produce N-acetylglucosamine-1-phosphate (GlcNAc-1-P), which is converted into UDP-GlcNAc by the transfer of uridine 5-monophosphate (from uridine 5-triphosphate), a reaction catalyzed by the N-terminal domain. This is Bifunctional protein GlmU from Synechococcus sp. (strain JA-3-3Ab) (Cyanobacteria bacterium Yellowstone A-Prime).